The following is a 340-amino-acid chain: S-adenosylmethionine:tRNA ribosyltransferase-isomerase (340 aa).

It belongs to the QueA family. Monomer.

Its subcellular location is the cytoplasm. It carries out the reaction 7-aminomethyl-7-carbaguanosine(34) in tRNA + S-adenosyl-L-methionine = epoxyqueuosine(34) in tRNA + adenine + L-methionine + 2 H(+). It functions in the pathway tRNA modification; tRNA-queuosine biosynthesis. Functionally, transfers and isomerizes the ribose moiety from AdoMet to the 7-aminomethyl group of 7-deazaguanine (preQ1-tRNA) to give epoxyqueuosine (oQ-tRNA). The chain is S-adenosylmethionine:tRNA ribosyltransferase-isomerase from Aliarcobacter butzleri (strain RM4018) (Arcobacter butzleri).